A 113-amino-acid chain; its full sequence is Large ribosomal subunit protein uL22 (113 aa).

Belongs to the universal ribosomal protein uL22 family. In terms of assembly, part of the 50S ribosomal subunit.

In terms of biological role, this protein binds specifically to 23S rRNA; its binding is stimulated by other ribosomal proteins, e.g. L4, L17, and L20. It is important during the early stages of 50S assembly. It makes multiple contacts with different domains of the 23S rRNA in the assembled 50S subunit and ribosome. Functionally, the globular domain of the protein is located near the polypeptide exit tunnel on the outside of the subunit, while an extended beta-hairpin is found that lines the wall of the exit tunnel in the center of the 70S ribosome. This Opitutus terrae (strain DSM 11246 / JCM 15787 / PB90-1) protein is Large ribosomal subunit protein uL22.